A 187-amino-acid chain; its full sequence is MNLQHHFLIAMPALQDPIFRRSVVYICEHNTNGAMGIIVNKPLENLKIEGILEKLKITPEPRDESIRLDKPVMLGGPLAEDRGFILHTPPSNFASSIRISDNTVMTTSRDVLETLGTDKQPSDILVALGYASWEKGQLEQEILDNAWLTAPADLNILFKTPIADRWREAAKLIGVDILTMPGVAGHA.

Belongs to the UPF0301 (AlgH) family.

The chain is UPF0301 protein YqgE from Escherichia coli O7:K1 (strain IAI39 / ExPEC).